The chain runs to 260 residues: CD40 ligand (260 aa).

Topologically, residues 1-22 (MIETYSQTAPRSVATGPPVSMK) are cytoplasmic. The helical; Signal-anchor for type II membrane protein transmembrane segment at 23–46 (IFMYLLTVFLITQMIGSALFAVYL) threads the bilayer. Over 47-260 (HRRLDKIEDE…GFTSFGLLKL (214 aa)) the chain is Extracellular. One can recognise a THD domain in the interval 121–260 (IAAHVISEAS…GFTSFGLLKL (140 aa)). Cys177 and Cys217 are joined by a disulfide. An N-linked (GlcNAc...) asparagine glycan is attached at Asn239.

Belongs to the tumor necrosis factor family. In terms of assembly, homotrimer. Interacts with CD28. CD40 ligand, soluble form: Exists as either a monomer or a homotrimer. Forms a ternary complex between CD40 and integrins for CD40-CD40LG signaling. Post-translationally, the soluble form derives from the membrane form by proteolytic processing.

It localises to the cell membrane. It is found in the cell surface. The protein resides in the secreted. Functionally, cytokine that acts as a ligand to CD40/TNFRSF5. Costimulates T-cell proliferation and cytokine production. Its cross-linking on T-cells generates a costimulatory signal which enhances the production of IL4 and IL10 in conjunction with the TCR/CD3 ligation and CD28 costimulation. Induces the activation of NF-kappa-B. Induces the activation of kinases MAPK8 and PAK2 in T-cells. Mediates B-cell proliferation in the absence of co-stimulus as well as IgE production in the presence of IL4. Involved in immunoglobulin class switching. Acts as a ligand for integrins, specifically ITGA5:ITGB1 and ITGAV:ITGB3; both integrins and the CD40 receptor are required for activation of CD40-CD40LG signaling, which have cell-type dependent effects, such as B-cell activation, NF-kappa-B signaling and anti-apoptotic signaling. The polypeptide is CD40 ligand (CD40LG) (Canis lupus familiaris (Dog)).